A 261-amino-acid chain; its full sequence is Cytochrome c oxidase subunit 3 (261 aa).

Topologically, residues 1–15 (MTHQTHAYHMVNPSP) are mitochondrial matrix. Residues 16–34 (WPLTGALSALLMTSGLIMW) traverse the membrane as a helical segment. Residues 35–40 (FHFNST) lie on the Mitochondrial intermembrane side of the membrane. The chain crosses the membrane as a helical span at residues 41–66 (ALLMLGLTTNMLTMYQWWRDIVREST). Over 67–72 (FQGHHT) the chain is Mitochondrial matrix. A helical membrane pass occupies residues 73–105 (PTVQKGLRYGMILFIISEVLFFTGFFWAFYHSS). The Mitochondrial intermembrane segment spans residues 106-128 (LAPTPELGGCWPPTGIHPLNPLE). The helical transmembrane segment at 129-152 (VPLLNTSVLLASGVSITWAHHSLM) threads the bilayer. Residues 153–155 (EGN) are Mitochondrial matrix-facing. A helical transmembrane segment spans residues 156–183 (RNHMLQALFITIALGVYFTLLQASEYYE). At 184-190 (APFTISD) the chain is on the mitochondrial intermembrane side. A helical transmembrane segment spans residues 191–223 (GVYGSTFFVATGFHGLHVIIGSTFLIVCFFRQL). The Mitochondrial matrix segment spans residues 224 to 232 (KFHFTSNHH). The helical transmembrane segment at 233–256 (FGFEAAAWYWHFVDVVWLFLYVSI) threads the bilayer. The Mitochondrial intermembrane portion of the chain corresponds to 257–261 (YWWGS).

It belongs to the cytochrome c oxidase subunit 3 family. In terms of assembly, component of the cytochrome c oxidase (complex IV, CIV), a multisubunit enzyme composed of 14 subunits. The complex is composed of a catalytic core of 3 subunits MT-CO1, MT-CO2 and MT-CO3, encoded in the mitochondrial DNA, and 11 supernumerary subunits COX4I, COX5A, COX5B, COX6A, COX6B, COX6C, COX7A, COX7B, COX7C, COX8 and NDUFA4, which are encoded in the nuclear genome. The complex exists as a monomer or a dimer and forms supercomplexes (SCs) in the inner mitochondrial membrane with NADH-ubiquinone oxidoreductase (complex I, CI) and ubiquinol-cytochrome c oxidoreductase (cytochrome b-c1 complex, complex III, CIII), resulting in different assemblies (supercomplex SCI(1)III(2)IV(1) and megacomplex MCI(2)III(2)IV(2)).

The protein localises to the mitochondrion inner membrane. The enzyme catalyses 4 Fe(II)-[cytochrome c] + O2 + 8 H(+)(in) = 4 Fe(III)-[cytochrome c] + 2 H2O + 4 H(+)(out). Component of the cytochrome c oxidase, the last enzyme in the mitochondrial electron transport chain which drives oxidative phosphorylation. The respiratory chain contains 3 multisubunit complexes succinate dehydrogenase (complex II, CII), ubiquinol-cytochrome c oxidoreductase (cytochrome b-c1 complex, complex III, CIII) and cytochrome c oxidase (complex IV, CIV), that cooperate to transfer electrons derived from NADH and succinate to molecular oxygen, creating an electrochemical gradient over the inner membrane that drives transmembrane transport and the ATP synthase. Cytochrome c oxidase is the component of the respiratory chain that catalyzes the reduction of oxygen to water. Electrons originating from reduced cytochrome c in the intermembrane space (IMS) are transferred via the dinuclear copper A center (CU(A)) of subunit 2 and heme A of subunit 1 to the active site in subunit 1, a binuclear center (BNC) formed by heme A3 and copper B (CU(B)). The BNC reduces molecular oxygen to 2 water molecules using 4 electrons from cytochrome c in the IMS and 4 protons from the mitochondrial matrix. The protein is Cytochrome c oxidase subunit 3 (MT-CO3) of Cephalophorus natalensis (Natal red duiker).